Consider the following 553-residue polypeptide: Mannuronan C5-epimerase AlgE4 (553 aa).

8 PbH1 repeats span residues 133–155 (DRDV…DPHE), 157–179 (TINL…VADY), 180–202 (LVDS…NVVT), 204–226 (THDF…VVQR), 234–256 (PSNI…LLKM), 257–279 (TSDI…RVYG), 280–301 (AQDV…AVPE), and 320–342 (TLNT…GIQE). Positions 367–427 (YGPHSTVSGE…DILDGGAGRD (61 aa)) are disordered. Hemolysin-type calcium-binding repeat units follow at residues 403-420 (QGGS…DDIL) and 421-438 (DGGA…ADTF).

This sequence belongs to the D-mannuronate C5-epimerase family. It depends on Ca(2+) as a cofactor.

The protein localises to the secreted. The catalysed reaction is [(1-&gt;4)-beta-D-mannuronosyl](n) = [alginate](n). The protein operates within glycan biosynthesis; alginate biosynthesis. Inhibited by zinc. Functionally, converts beta-D-mannuronic acid (M) to alpha-L-guluronic acid (G), but introduces almost exclusively MG blocks, producing a polymer with non-gel-forming capacity. The protein is Mannuronan C5-epimerase AlgE4 of Azotobacter vinelandii.